We begin with the raw amino-acid sequence, 215 residues long: Uracil-DNA glycosylase (215 aa).

Aspartate 59 functions as the Proton acceptor in the catalytic mechanism.

This sequence belongs to the uracil-DNA glycosylase (UDG) superfamily. UNG family.

Its subcellular location is the cytoplasm. The catalysed reaction is Hydrolyzes single-stranded DNA or mismatched double-stranded DNA and polynucleotides, releasing free uracil.. In terms of biological role, excises uracil residues from the DNA which can arise as a result of misincorporation of dUMP residues by DNA polymerase or due to deamination of cytosine. The chain is Uracil-DNA glycosylase from Aliarcobacter butzleri (strain RM4018) (Arcobacter butzleri).